We begin with the raw amino-acid sequence, 78 residues long: Acyl carrier protein (78 aa).

A Carrier domain is found at 2–77 (SSIEERVKKI…LAINYINENL (76 aa)). Position 37 is an O-(pantetheine 4'-phosphoryl)serine (S37).

This sequence belongs to the acyl carrier protein (ACP) family. In terms of processing, 4'-phosphopantetheine is transferred from CoA to a specific serine of apo-ACP by AcpS. This modification is essential for activity because fatty acids are bound in thioester linkage to the sulfhydryl of the prosthetic group.

It localises to the cytoplasm. Its pathway is lipid metabolism; fatty acid biosynthesis. Its function is as follows. Carrier of the growing fatty acid chain in fatty acid biosynthesis. In Saccharophagus degradans (strain 2-40 / ATCC 43961 / DSM 17024), this protein is Acyl carrier protein.